The following is an 875-amino-acid chain: DNA mismatch repair protein MutS (875 aa).

Residue 625 to 632 (GPNMGGKS) participates in ATP binding.

It belongs to the DNA mismatch repair MutS family.

This protein is involved in the repair of mismatches in DNA. It is possible that it carries out the mismatch recognition step. This protein has a weak ATPase activity. This Symbiobacterium thermophilum (strain DSM 24528 / JCM 14929 / IAM 14863 / T) protein is DNA mismatch repair protein MutS.